The chain runs to 389 residues: 23S rRNA (uracil(747)-C(5))-methyltransferase RlmC (389 aa).

The [4Fe-4S] cluster site is built by cysteine 6, cysteine 14, cysteine 17, and cysteine 92. The S-adenosyl-L-methionine site is built by glutamine 217, phenylalanine 246, glutamate 273, and asparagine 319. The Nucleophile role is filled by cysteine 346.

This sequence belongs to the class I-like SAM-binding methyltransferase superfamily. RNA M5U methyltransferase family. RlmC subfamily.

The enzyme catalyses uridine(747) in 23S rRNA + S-adenosyl-L-methionine = 5-methyluridine(747) in 23S rRNA + S-adenosyl-L-homocysteine + H(+). In terms of biological role, catalyzes the formation of 5-methyl-uridine at position 747 (m5U747) in 23S rRNA. The chain is 23S rRNA (uracil(747)-C(5))-methyltransferase RlmC from Glaesserella parasuis serovar 5 (strain SH0165) (Haemophilus parasuis).